The sequence spans 383 residues: Lipid-A-disaccharide synthase (383 aa).

It belongs to the LpxB family.

The enzyme catalyses a lipid X + a UDP-2-N,3-O-bis[(3R)-3-hydroxyacyl]-alpha-D-glucosamine = a lipid A disaccharide + UDP + H(+). The protein operates within bacterial outer membrane biogenesis; LPS lipid A biosynthesis. Condensation of UDP-2,3-diacylglucosamine and 2,3-diacylglucosamine-1-phosphate to form lipid A disaccharide, a precursor of lipid A, a phosphorylated glycolipid that anchors the lipopolysaccharide to the outer membrane of the cell. This Aliivibrio fischeri (strain MJ11) (Vibrio fischeri) protein is Lipid-A-disaccharide synthase.